The following is a 463-amino-acid chain: UDP-N-acetylmuramoylalanine--D-glutamate ligase (463 aa).

121–127 (GTNGKST) is an ATP binding site.

The protein belongs to the MurCDEF family.

Its subcellular location is the cytoplasm. It catalyses the reaction UDP-N-acetyl-alpha-D-muramoyl-L-alanine + D-glutamate + ATP = UDP-N-acetyl-alpha-D-muramoyl-L-alanyl-D-glutamate + ADP + phosphate + H(+). It functions in the pathway cell wall biogenesis; peptidoglycan biosynthesis. Functionally, cell wall formation. Catalyzes the addition of glutamate to the nucleotide precursor UDP-N-acetylmuramoyl-L-alanine (UMA). The protein is UDP-N-acetylmuramoylalanine--D-glutamate ligase (murD) of Rhizobium meliloti (strain 1021) (Ensifer meliloti).